The following is a 103-amino-acid chain: Large ribosomal subunit protein bL21 (103 aa).

The protein belongs to the bacterial ribosomal protein bL21 family. In terms of assembly, part of the 50S ribosomal subunit. Contacts protein L20.

This protein binds to 23S rRNA in the presence of protein L20. The sequence is that of Large ribosomal subunit protein bL21 from Laribacter hongkongensis (strain HLHK9).